Consider the following 381-residue polypeptide: GDP-mannose transporter (381 aa).

The Cytoplasmic segment spans residues Met-1–Pro-44. The disordered stretch occupies residues Gln-19–Ser-41. Residues Ala-26–Pro-35 show a composition bias toward pro residues. The chain crosses the membrane as a helical span at residues Ile-45–Val-65. Residues Leu-66 to Asp-70 are Lumenal-facing. Residues Phe-71–Thr-91 traverse the membrane as a helical segment. The Cytoplasmic segment spans residues Cys-92–Arg-109. The helical transmembrane segment at Lys-110 to Ser-126 threads the bilayer. Residues Lys-127–Ser-133 lie on the Lumenal side of the membrane. Residues Ile-134 to Tyr-150 traverse the membrane as a helical segment. At Gly-151–Ser-159 the chain is on the cytoplasmic side. A helical transmembrane segment spans residues Val-160 to Ala-181. Residues Asp-182 to Thr-199 lie on the Lumenal side of the membrane. Residues Leu-200–Gly-220 traverse the membrane as a helical segment. The Cytoplasmic portion of the chain corresponds to Met-221–Asp-234. A helical transmembrane segment spans residues Thr-235–Glu-255. Over Asp-256–Ser-273 the chain is Lumenal. Residues Ile-274–Trp-294 traverse the membrane as a helical segment. The Cytoplasmic segment spans residues Cys-295–Thr-302. The chain crosses the membrane as a helical span at residues Thr-303–Phe-323. Residues Asp-324–Pro-326 lie on the Lumenal side of the membrane. Residues Val-327–Val-347 form a helical membrane-spanning segment. Over Ala-348–Ser-381 the chain is Cytoplasmic. The segment at Thr-358–Ser-381 is disordered. Polar residues predominate over residues Pro-366–Ser-381.

This sequence belongs to the TPT transporter family. SLC35D subfamily. Homooligomer.

It is found in the golgi apparatus membrane. Its subcellular location is the cytoplasmic vesicle membrane. It localises to the endoplasmic reticulum membrane. Functionally, involved in the import of GDP-mannose from the cytoplasm into the Golgi lumen. This is GDP-mannose transporter (gmt1) from Aspergillus niger (strain ATCC MYA-4892 / CBS 513.88 / FGSC A1513).